The primary structure comprises 144 residues: Flagellar assembly factor FliW (144 aa).

The protein belongs to the FliW family. In terms of assembly, interacts with translational regulator CsrA and flagellin(s).

It is found in the cytoplasm. Functionally, acts as an anti-CsrA protein, binds CsrA and prevents it from repressing translation of its target genes, one of which is flagellin. Binds to flagellin and participates in the assembly of the flagellum. This is Flagellar assembly factor FliW from Bacillus pumilus (strain SAFR-032).